The chain runs to 1040 residues: Putative protein tag-76 (1040 aa).

Polar residues predominate over residues 1 to 15 (MSRRNATSFVDNNTL). Disordered regions lie at residues 1-61 (MSRR…GSVS) and 322-367 (RTSK…PGAN). The segment covering 16–32 (TSSGISGSGSMSPPITS) has biased composition (low complexity). Positions 33–50 (RPASGQASPLTSNGSLSP) are enriched in polar residues. Residues 333-356 (GPGGPGGPGGYRGGRGGGRGGSYG) show a composition bias toward gly residues. The region spanning 379–486 (FTMDTLSRDT…LPMEHCLIDS (108 aa)) is the PAZ domain. Positions 660–966 (CIIVVLQSKN…VATRARCHVK (307 aa)) constitute a Piwi domain.

The sequence is that of Putative protein tag-76 (tag-76) from Caenorhabditis elegans.